The primary structure comprises 692 residues: DNA ligase (692 aa).

NAD(+) contacts are provided by residues 35 to 39 (DLVYD), 88 to 89 (SL), and glutamate 117. Residue lysine 119 is the N6-AMP-lysine intermediate of the active site. Positions 140, 176, 301, and 325 each coordinate NAD(+). Positions 416, 419, 434, and 439 each coordinate Zn(2+). Residues 611–692 (LTNQSNSWAS…FDLIKNSKKT (82 aa)) enclose the BRCT domain.

This sequence belongs to the NAD-dependent DNA ligase family. LigA subfamily. The cofactor is Mg(2+). It depends on Mn(2+) as a cofactor.

It catalyses the reaction NAD(+) + (deoxyribonucleotide)n-3'-hydroxyl + 5'-phospho-(deoxyribonucleotide)m = (deoxyribonucleotide)n+m + AMP + beta-nicotinamide D-nucleotide.. In terms of biological role, DNA ligase that catalyzes the formation of phosphodiester linkages between 5'-phosphoryl and 3'-hydroxyl groups in double-stranded DNA using NAD as a coenzyme and as the energy source for the reaction. It is essential for DNA replication and repair of damaged DNA. The sequence is that of DNA ligase from Mesomycoplasma hyopneumoniae (strain J / ATCC 25934 / NCTC 10110) (Mycoplasma hyopneumoniae).